Here is a 188-residue protein sequence, read N- to C-terminus: M-phase phosphoprotein 6 homolog (188 aa).

The disordered stretch occupies residues 93–188 (EENVDEKDVS…NKNKKKKKRN (96 aa)). Basic and acidic residues predominate over residues 120-149 (LTERERRKQELVSKKAEASRKMEVKAPAKE). Ser-167 carries the post-translational modification Phosphoserine. A compositionally biased stretch (basic residues) spans 174–188 (RKTKKNKNKKKKKRN).

Belongs to the MPP6 family. Associates with the RNA exosome complex.

Its subcellular location is the nucleus. Its function is as follows. RNA-binding protein that associates with the RNA exosome complex. The chain is M-phase phosphoprotein 6 homolog from Schizosaccharomyces pombe (strain 972 / ATCC 24843) (Fission yeast).